The following is a 124-amino-acid chain: MSVFGGLWRSAVNLCQSSRLFSTGSCARIRMHAIPKLKEVDRWTEKRSMFGVYDNIGILGDFKAHPKDMIRGPVWVRGFRGNELQRLLRKRNMVGDRMMTEDRHNLQKRISHLYRRFNRHGKHR.

The transit peptide at 1–31 (MSVFGGLWRSAVNLCQSSRLFSTGSCARIRM) directs the protein to the mitochondrion.

The protein belongs to the mitochondrion-specific ribosomal protein mL51 family. In terms of assembly, component of the mitochondrial ribosome large subunit (39S) which comprises a 16S rRNA and about 50 distinct proteins.

The protein resides in the mitochondrion. This chain is Large ribosomal subunit protein mL51 (mrpl51), found in Danio rerio (Zebrafish).